Consider the following 359-residue polypeptide: Phospho-N-acetylmuramoyl-pentapeptide-transferase (359 aa).

10 helical membrane passes run 3-23, 55-75, 84-104, 117-137, 156-176, 187-207, 231-251, 255-275, 280-300, and 334-354; these read QIII…PVLI, VAIL…GIAF, GLLV…DDFI, TSKT…VLQF, IATV…LVMS, LDGL…IVTF, LAVI…WNAA, IFMG…LSVT, LLAV…VLQI, and FWLL…GEWL.

The protein belongs to the glycosyltransferase 4 family. MraY subfamily. Requires Mg(2+) as cofactor.

The protein localises to the cell membrane. It carries out the reaction UDP-N-acetyl-alpha-D-muramoyl-L-alanyl-gamma-D-glutamyl-meso-2,6-diaminopimeloyl-D-alanyl-D-alanine + di-trans,octa-cis-undecaprenyl phosphate = di-trans,octa-cis-undecaprenyl diphospho-N-acetyl-alpha-D-muramoyl-L-alanyl-D-glutamyl-meso-2,6-diaminopimeloyl-D-alanyl-D-alanine + UMP. The protein operates within cell wall biogenesis; peptidoglycan biosynthesis. Catalyzes the initial step of the lipid cycle reactions in the biosynthesis of the cell wall peptidoglycan: transfers peptidoglycan precursor phospho-MurNAc-pentapeptide from UDP-MurNAc-pentapeptide onto the lipid carrier undecaprenyl phosphate, yielding undecaprenyl-pyrophosphoryl-MurNAc-pentapeptide, known as lipid I. The protein is Phospho-N-acetylmuramoyl-pentapeptide-transferase of Mycobacteroides abscessus (strain ATCC 19977 / DSM 44196 / CCUG 20993 / CIP 104536 / JCM 13569 / NCTC 13031 / TMC 1543 / L948) (Mycobacterium abscessus).